Reading from the N-terminus, the 182-residue chain is Small ribosomal subunit protein uS4c (182 aa).

The tract at residues Gly13–Gly32 is disordered. The S4 RNA-binding domain maps to Met82–Asn143.

The protein belongs to the universal ribosomal protein uS4 family. As to quaternary structure, part of the 30S ribosomal subunit. Contacts protein S5. The interaction surface between S4 and S5 is involved in control of translational fidelity.

The protein localises to the plastid. It localises to the chloroplast. One of the primary rRNA binding proteins, it binds directly to 16S rRNA where it nucleates assembly of the body of the 30S subunit. Its function is as follows. With S5 and S12 plays an important role in translational accuracy. This chain is Small ribosomal subunit protein uS4c (rps4), found in Scadoxus puniceus (Paintbrush lily).